The chain runs to 638 residues: Chaperone protein DnaK (638 aa).

Thr198 carries the post-translational modification Phosphothreonine; by autocatalysis. The segment covering 603–618 has biased composition (low complexity); that stretch reads QQAQAQQAQGADADAQ. Residues 603–638 form a disordered region; the sequence is QQAQAQQAQGADADAQQSKEDDVVDAEFEEVKDDKK. A compositionally biased stretch (acidic residues) spans 624–638; the sequence is DVVDAEFEEVKDDKK.

This sequence belongs to the heat shock protein 70 family.

In terms of biological role, acts as a chaperone. The polypeptide is Chaperone protein DnaK (Vibrio campbellii (strain ATCC BAA-1116)).